We begin with the raw amino-acid sequence, 712 residues long: Transcriptional regulator GZF3 (712 aa).

Positions 1–13 (MSMSDIQQRPQIP) are enriched in polar residues. 5 disordered regions span residues 1 to 20 (MSMS…TAAV), 27 to 135 (NVNT…GPVC), 173 to 280 (SLKT…HHHL), 377 to 533 (DVSS…GNNF), and 596 to 712 (LNNN…KVKI). 2 stretches are compositionally biased toward low complexity: residues 27 to 84 (NVNT…EQSS) and 107 to 131 (PKTG…ISMS). Residues 135–159 (CGNCQTQTTPLWRRDETGQVLCNAC) form a GATA-type zinc finger. Over residues 186–199 (KQNGSNSQSSKSSG) the composition is skewed to low complexity. Residues 213-223 (GKKSPKSKKKS) show a composition bias toward basic residues. Residues 246–261 (ATSNNTPTFKSTTSQS) show a composition bias toward polar residues. Residues 268–280 (NHHHQHHNHHHHL) are compositionally biased toward basic residues. The segment covering 379–414 (SSINGSSTSLSSSSASSSIFSSVAPSTSSSSSLSNG) has biased composition (low complexity). 2 stretches are compositionally biased toward polar residues: residues 429–447 (SKIS…TPLQ) and 484–498 (QQSM…RSPI). Low complexity-rich tracts occupy residues 499-532 (NGNQ…NGNN) and 596-616 (LNNN…QPQQ). Residues 545 to 598 (TRISELELVNDLYRTRIMELEAMEQAARLRENSMKKRLDEVMNLQINYQNLLNN) are a coiled coil. A compositionally biased stretch (polar residues) spans 631–667 (DQGSQSISPNVSITGSTTITSPNSRSKIISETTPTHH).

The protein localises to the nucleus. Probable transcription factor involved in response to fluconazole, LiCl, and copper. This chain is Transcriptional regulator GZF3 (GZF3), found in Candida albicans (strain SC5314 / ATCC MYA-2876) (Yeast).